Consider the following 264-residue polypeptide: Ribonuclease HII (264 aa).

The region spanning 33-224 (GPVAGVDEVG…VRRVASGSNT (192 aa)) is the RNase H type-2 domain. Residues Asp-39, Glu-40, and Asp-133 each contribute to the a divalent metal cation site. The interval 222-264 (SNTAEVADGQPDPRDGTAQTGEGRWSKSSHPATMRATGRAQGT) is disordered.

It belongs to the RNase HII family. Requires Mn(2+) as cofactor. Mg(2+) is required as a cofactor.

It localises to the cytoplasm. The catalysed reaction is Endonucleolytic cleavage to 5'-phosphomonoester.. In terms of biological role, endonuclease that specifically degrades the RNA of RNA-DNA hybrids. The polypeptide is Ribonuclease HII (Mycobacterium bovis (strain BCG / Pasteur 1173P2)).